The sequence spans 480 residues: Lysostaphin (480 aa).

An N-terminal signal peptide occupies residues 1–23 (MKKTKNNYYTTPLAIGLSTFALA). The propeptide occupies 24 to 234 (SIVYGGIQNE…ALVQNRTALR (211 aa)). Repeat copies occupy residues 49-61 (AEVETSKPPVENT), 62-74 (AEVETSKAPVENT), 75-87 (AEVETSKAPVENT), 88-100 (AEVETSKAPVENT), 101-113 (AEVETSKAPVENT), 114-126 (AEVETSKAPVENT), 127-139 (AEVETSKAPVENT), 140-152 (AEVETSKAPVENT), 153-165 (AEVETSKAPVENT), 166-178 (AEVETSKAPVENT), 179-191 (AEVETSKAPVENT), 192-204 (AEVETSKAPVENT), and 205-217 (AEVETSKAPVENT). The 14 X 13 AA tandem repeats of A-E-V-E-T-S-K-[AP]-P-V-E-N-T stretch occupies residues 49-230 (AEVETSKPPV…ETSKALVQNR (182 aa)). The interval 51–219 (VETSKPPVEN…SKAPVENTAE (169 aa)) is disordered. A 14; approximate repeat occupies 218–230 (AEVETSKALVQNR). Residues His-266 and Asp-270 each coordinate Zn(2+). His-347 is a catalytic residue. His-349 contributes to the Zn(2+) binding site. The SH3b domain maps to 400–468 (SESASFTPNT…YLPVRTWNKS (69 aa)).

The protein belongs to the peptidase M23B family. As to quaternary structure, monomer. It depends on Zn(2+) as a cofactor.

The protein localises to the secreted. It catalyses the reaction Hydrolysis of the -Gly-|-Gly- bond in the pentaglycine inter-peptide link joining staphylococcal cell wall peptidoglycans.. In terms of biological role, lyses staphylococcal cells by hydrolyzing the polyglycine interpeptide bridges of the peptidoglycan. This chain is Lysostaphin (lss), found in Staphylococcus staphylolyticus.